The sequence spans 113 residues: MSMQFGSSTEFSNMCGVTLMNTPIGRVVAEVMGAKDGVELTEYPSMIRVDGQRLLDFDYEELTDALGQEFDGSIFEEISSTHYGRMVHLDEKTLLFASPEDAAEYIGFDLTAQ.

Belongs to the TmoD/XamoD family. As to quaternary structure, the propane 2-monooxygenase multicomponent enzyme system is composed of an electron transfer component and a monooxygenase component interacting with the effector protein PrmD. The electron transfer component is composed of a reductase (PrmB), and the monooxygenase component is formed by a large subunit (PrmA) and a small subunit (PrmC).

Functionally, effector component of the propane 2-monooxygenase multicomponent enzyme system which is involved in the degradation of propane via the O2-dependent hydroxylation of propane. In Rhodococcus jostii (strain RHA1), this protein is Propane 2-monooxygenase, effector component.